Here is a 94-residue protein sequence, read N- to C-terminus: Acylphosphatase (94 aa).

The Acylphosphatase-like domain maps to 5 to 94 (RLTAFVHGHV…PRDVEGFVER (90 aa)). Active-site residues include R20 and N38.

It belongs to the acylphosphatase family.

The enzyme catalyses an acyl phosphate + H2O = a carboxylate + phosphate + H(+). In Corynebacterium glutamicum (strain R), this protein is Acylphosphatase (acyP).